Reading from the N-terminus, the 319-residue chain is Forkhead box protein B1 (319 aa).

The fork-head DNA-binding region spans 13 to 107; the sequence is KPPYSYISLT…ENGSFLRRRK (95 aa). The tract at residues 278–310 is disordered; that stretch reads LSNSSPSMSPTSPQTATSQSSPATPSDTLTNPS. Residues 279–305 show a composition bias toward low complexity; it reads SNSSPSMSPTSPQTATSQSSPATPSDT.

In early gastrulae, expressed in the inner layer of the posterior dorsal ectoderm and in non-involuted mesoderm. By the mid-gastrula stage, expressed solely in the posterior ectoderm. At the end of gastrulation, expressed in ectodermal regions fated to become diencephalon, midbrain and hindbrain, and weakly expressed in regions fated to become spinal cord and tailbud. At the neurula stage, expressed in the midbrain and posterior forebrain (diencephalon) but not in the more anterior forebrain (telencephalon). Also expressed posteriorly in rhombomere 5. At tailbud stages, expression remains in the anterior brain and is also detectable along the length of the central nervous system and in the tailbud.

Its subcellular location is the nucleus. Its function is as follows. Probable transcription factor. May be involved in the early anteroposterior patterning of the neuroectoderm. The chain is Forkhead box protein B1 from Xenopus laevis (African clawed frog).